The following is a 282-amino-acid chain: Probable endonuclease 4 (282 aa).

Zn(2+) contacts are provided by His-69, His-109, Glu-145, Asp-179, His-182, His-216, Asp-229, His-231, and Glu-261.

It belongs to the AP endonuclease 2 family. Requires Zn(2+) as cofactor.

It carries out the reaction Endonucleolytic cleavage to 5'-phosphooligonucleotide end-products.. Functionally, endonuclease IV plays a role in DNA repair. It cleaves phosphodiester bonds at apurinic or apyrimidinic (AP) sites, generating a 3'-hydroxyl group and a 5'-terminal sugar phosphate. The sequence is that of Probable endonuclease 4 from Magnetococcus marinus (strain ATCC BAA-1437 / JCM 17883 / MC-1).